The following is a 782-amino-acid chain: Glucocorticoid receptor (782 aa).

Residues 1–20 (MDPKESLTPPSREEIPSSVL) form a disordered region. The tract at residues 1 to 425 (MDPKESLTPP…SAATGPPPKL (425 aa)) is modulating. Threonine 8 bears the Phosphothreonine mark. Omega-N-methylarginine is present on arginine 24. Serine 46 carries the post-translational modification Phosphoserine. The tract at residues 48–79 (SLAAVSQPDSKQQRLAVDFPKGSGSNAQQPDL) is disordered. 6 positions are modified to phosphoserine: serine 114, serine 135, serine 142, serine 208, serine 216, and serine 231. The disordered stretch occupies residues 130–184 (LSRSTSVPENPKSSASAAGPAAPAEKAFPKTHSDGAPEQPNVKGQTGTNGGNVKL). Over residues 140-155 (PKSSASAAGPAAPAEK) the composition is skewed to low complexity. Residue lysine 263 forms a Glycyl lysine isopeptide (Lys-Gly) (interchain with G-Cter in SUMO2) linkage. Residue serine 272 is modified to Phosphoserine. Glycyl lysine isopeptide (Lys-Gly) (interchain with G-Cter in SUMO); alternate cross-links involve residues lysine 282 and lysine 298. Glycyl lysine isopeptide (Lys-Gly) (interchain with G-Cter in SUMO2); alternate cross-links involve residues lysine 282 and lysine 298. Phosphoserine occurs at positions 312 and 410. Lysine 424 participates in a covalent cross-link: Glycyl lysine isopeptide (Lys-Gly) (interchain with G-Cter in ubiquitin). NR C4-type zinc fingers lie at residues 426–446 (CLVC…CGSC) and 462–486 (CAGR…YRKC). Residues 426–491 (CLVCSDEASG…RYRKCLQAGM (66 aa)) constitute a DNA-binding region (nuclear receptor). 4 positions are modified to N6-acetyllysine: lysine 485, lysine 497, lysine 499, and lysine 500. Positions 490–782 (GMNLEARKTK…NIKKLLFHQK (293 aa)) are interaction with CLOCK. The hinge stretch occupies residues 492 to 528 (NLEARKTKKKIKGIQQATTGVSQETSENSANKTIVPA). Residues 529–763 (TLPQLTPTLV…FPEMLAEIIT (235 aa)) form the NR LBD domain. The segment at 537–702 (LVSLLEVIEP…EIRMTYIKEL (166 aa)) is interaction with CRY1. Lysine 708 is covalently cross-linked (Glycyl lysine isopeptide (Lys-Gly) (interchain with G-Cter in SUMO)).

The protein belongs to the nuclear hormone receptor family. NR3 subfamily. In terms of assembly, heteromultimeric cytoplasmic complex with HSP90AA1, HSPA1A/HSPA1B, and FKBP5 or another immunophilin such as PPID, STIP1, or the immunophilin homolog PPP5C. Upon ligand binding FKBP5 dissociates from the complex and FKBP4 takes its place, thereby linking the complex to dynein and mediating transport to the nucleus, where the complex dissociates. Probably forms a complex composed of chaperones HSP90 and HSP70, co-chaperones CDC37, PPP5C, TSC1 and client protein TSC2, CDK4, AKT, RAF1 and NR3C1; this complex does not contain co-chaperones STIP1/HOP and PTGES3/p23. Directly interacts with UNC45A. Binds to DNA as a homodimer, and as heterodimer with NR3C2 or the retinoid X receptor. Binds STAT5A and STAT5B homodimers and heterodimers. Interacts with NRIP1, POU2F1, POU2F2 and TRIM28. Interacts with several coactivator complexes, including the SMARCA4 complex, CREBBP/EP300, TADA2L (Ada complex) and p160 coactivators such as NCOA2 and NCOA6. Interaction with BAG1 inhibits transactivation. Interacts with HEXIM1 and TGFB1I1. Interacts with NCOA1. Interacts with NCOA3, SMARCA4, SMARCC1, SMARCD1, and SMARCE1. Interacts with CLOCK, CRY1 and CRY2 in a ligand-dependent fashion. Interacts with CIART. Interacts with RWDD3. Interacts with UBE2I/UBC9 and this interaction is enhanced in the presence of RWDD3. Interacts with GRIP1. Interacts with NR4A3 (via nuclear receptor DNA-binding domain), represses transcription activity of NR4A3 on the POMC promoter Nur response element (NurRE). Directly interacts with PNRC2 to attract and form a complex with UPF1 and DCP1A; the interaction leads to rapid mRNA degradation. Interacts with GSK3B. Interacts with FNIP1 and FNIP2. Interacts (via C-terminus) with HNRNPU (via C-terminus). Interacts with MCM3AP. Interacts (via domain NR LBD) with HSP90AA1 and HSP90AB1. In the absence of hormonal ligand, interacts with TACC1. Interacts (via NR LBD domain) with ZNF764 (via KRAB domain); the interaction regulates transcription factor activity of NR3C1 by directing its actions toward certain biologic pathways. Acetylation by CLOCK reduces its binding to glucocorticoid response elements and its transcriptional activity. Post-translationally, increased proteasome-mediated degradation in response to glucocorticoids. In terms of processing, phosphorylated in the absence of hormone; becomes hyperphosphorylated in the presence of glucocorticoid. The Ser-208, Ser-231 and Ser-410-phosphorylated forms are mainly cytoplasmic, and the Ser-216-phosphorylated form is nuclear. Phosphorylation at Ser-216 increases transcriptional activity. Phosphorylation at Ser-208, Ser-231 and Ser-410 decreases signaling capacity. Phosphorylation at Ser-410 may protect from glucocorticoid-induced apoptosis. Phosphorylation at Ser-208 and Ser-216 is not required in regulation of chromosome segregation. May be dephosphorylated by PPP5C, attenuates NR3C1 action. Ubiquitinated by UBR5, leading to its degradation: UBR5 specifically recognizes and binds ligand-bound NR3C1 when it is not associated with coactivators (NCOAs). In presence of NCOAs, the UBR5-degron is not accessible, preventing its ubiquitination and degradation. Post-translationally, sumoylation at Lys-282 and Lys-298 negatively regulates its transcriptional activity. Sumoylation at Lys-708 positively regulates its transcriptional activity in the presence of RWDD3. Sumoylation at Lys-282 and Lys-298 is dispensable whereas sumoylation at Lys-708 is critical for the stimulatory effect of RWDD3 on its transcriptional activity. Heat shock increases sumoylation in a RWDD3-dependent manner.

The protein resides in the cytoplasm. It is found in the nucleus. It localises to the mitochondrion. The protein localises to the cytoskeleton. Its subcellular location is the spindle. The protein resides in the microtubule organizing center. It is found in the centrosome. It localises to the chromosome. The protein localises to the nucleoplasm. Its function is as follows. Receptor for glucocorticoids (GC). Has a dual mode of action: as a transcription factor that binds to glucocorticoid response elements (GRE), both for nuclear and mitochondrial DNA, and as a modulator of other transcription factors. Affects inflammatory responses, cellular proliferation and differentiation in target tissues. Involved in chromatin remodeling. Plays a role in rapid mRNA degradation by binding to the 5' UTR of target mRNAs and interacting with PNRC2 in a ligand-dependent manner which recruits the RNA helicase UPF1 and the mRNA-decapping enzyme DCP1A, leading to RNA decay. Could act as a coactivator for STAT5-dependent transcription upon growth hormone (GH) stimulation and could reveal an essential role of hepatic GR in the control of body growth. Mediates glucocorticoid-induced apoptosis. Promotes accurate chromosome segregation during mitosis. May act as a tumor suppressor. May play a negative role in adipogenesis through the regulation of lipolytic and antilipogenic gene expression. This chain is Glucocorticoid receptor (NR3C1), found in Sus scrofa (Pig).